A 555-amino-acid polypeptide reads, in one-letter code: Wee1-like protein kinase 2 (555 aa).

Positions 1–112 (MADTETDQGL…NFSTPKNSLG (112 aa)) are disordered. Phosphoserine; by CaMK2 and PKA is present on Ser-15. A compositionally biased stretch (polar residues) spans 26–41 (EGQMTAQDIGGAQSQK). The span at 57 to 72 (TRDELHTSLSRDKESP) shows a compositional bias: basic and acidic residues. Residue Ser-71 is modified to Phosphoserine. Residues 102–112 (TNFSTPKNSLG) are compositionally biased toward polar residues. The Nuclear localization signal motif lies at 167-169 (KRK). Positions 208 to 485 (FFEIEKIGVG…ARSRILWPFL (278 aa)) constitute a Protein kinase domain. Residues 214–222 (IGVGEFGTV) and Lys-237 contribute to the ATP site. Positions 310–324 (KLKDILLQISLGLKY) match the Nuclear export signal motif. The active-site Proton acceptor is the Asp-334. 2 residues coordinate Mg(2+): Asn-339 and Asp-375. A coiled-coil region spans residues 488–514 (TDELQKQLNLEKSKTATLKRELKKARH).

Belongs to the protein kinase superfamily. Ser/Thr protein kinase family. WEE1 subfamily. Phosphorylated by PKA at Ser-15 in vitro, leading to activate kinase activity. Phosphorylation at Ser-15 by CaMK2, leading to increase its activity and promote metaphase II exit during egg activation. As to expression, ovary-specific.

Its subcellular location is the cytoplasm. The protein resides in the nucleus. It catalyses the reaction L-tyrosyl-[protein] + ATP = O-phospho-L-tyrosyl-[protein] + ADP + H(+). Oocyte-specific protein tyrosine kinase that phosphorylates and inhibits CDK1 and acts as a key regulator of meiosis during both prophase I and metaphase II. Required to maintain meiotic arrest in oocytes during the germinal vesicle (GV) stage, a long period of quiescence at dictyate prophase I, by phosphorylating CDK1 at 'Tyr-15', leading to inhibit CDK1 activity and prevent meiotic reentry. Also required for metaphase II exit during egg activation by phosphorylating CDK1 at 'Tyr-15', to ensure exit from meiosis in oocytes and promote pronuclear formation. This is Wee1-like protein kinase 2 (Wee2) from Mus musculus (Mouse).